The sequence spans 102 residues: NAD(P)H-quinone oxidoreductase subunit 4L (102 aa).

3 helical membrane-spanning segments follow: residues 4–24 (LQFF…GLIV), 33–53 (MSIE…SNFV), and 65–85 (VFVI…VLGI).

It belongs to the complex I subunit 4L family. NDH-1 can be composed of about 15 different subunits; different subcomplexes with different compositions have been identified which probably have different functions.

The protein resides in the cellular thylakoid membrane. It catalyses the reaction a plastoquinone + NADH + (n+1) H(+)(in) = a plastoquinol + NAD(+) + n H(+)(out). The enzyme catalyses a plastoquinone + NADPH + (n+1) H(+)(in) = a plastoquinol + NADP(+) + n H(+)(out). Functionally, NDH-1 shuttles electrons from an unknown electron donor, via FMN and iron-sulfur (Fe-S) centers, to quinones in the respiratory and/or the photosynthetic chain. The immediate electron acceptor for the enzyme in this species is believed to be plastoquinone. Couples the redox reaction to proton translocation, and thus conserves the redox energy in a proton gradient. Cyanobacterial NDH-1 also plays a role in inorganic carbon-concentration. In Synechococcus sp. (strain JA-3-3Ab) (Cyanobacteria bacterium Yellowstone A-Prime), this protein is NAD(P)H-quinone oxidoreductase subunit 4L.